Reading from the N-terminus, the 238-residue chain is N-(5'-phosphoribosyl)anthranilate isomerase (238 aa).

Belongs to the TrpF family.

The catalysed reaction is N-(5-phospho-beta-D-ribosyl)anthranilate = 1-(2-carboxyphenylamino)-1-deoxy-D-ribulose 5-phosphate. It functions in the pathway amino-acid biosynthesis; L-tryptophan biosynthesis; L-tryptophan from chorismate: step 3/5. This is N-(5'-phosphoribosyl)anthranilate isomerase from Methanosarcina acetivorans (strain ATCC 35395 / DSM 2834 / JCM 12185 / C2A).